The primary structure comprises 677 residues: WD repeat-containing protein 48 (677 aa).

A Phosphotyrosine modification is found at Tyr28. 8 WD repeats span residues Tyr28–Tyr67, His73–Thr112, Thr115–Ala154, Gly166–Lys205, Gly208–Thr247, Val250–Leu289, Glu292–Ala334, and Lys358–Asp397. At Lys214 the chain carries N6-acetyllysine. An N6-acetyllysine modification is found at Lys578. Residues Leu607–Glu628 form a disordered region. Low complexity predominate over residues Asn609 to Glu620. A Phosphothreonine modification is found at Thr613.

It belongs to the WD repeat WDR48 family. In terms of assembly, interacts with USP46. Interacts with USP1. Interacts with USP12. Component of the USP12-WDR20-WDR48 deubiquitinating complex. Component of the USP12-DMWD-WDR48 deubiquitinating complex. Interacts with PHLPP1. Interacts with RAD51AP1; the interaction is direct and promotes formation of a trimeric complex with RAD51 via RAD51AP1. Interacts with ATAD5; the interaction regulates USP1-mediated PCNA deubiquitination. Interacts with RAD51; the interaction is enhanced under replication stress. Interacts with ITCH; the interaction is more efficient when both USP12 and WDR48/UAF1 are involved and may facilitate recruitment of the USP12 deubiquitinating complex to Notch. (Microbial infection) Interacts with papillomavirus HPV11 E1 protein. As to quaternary structure, (Microbial infection) Interacts with Saimiriine herpesvirus TIP protein. In terms of assembly, (Microbial infection) Interacts with human cytomegalovirus protein UL138. (Microbial infection) Interacts with Epstein-Barr virus protein EBNA3. In terms of tissue distribution, ubiquitous.

The protein resides in the nucleus. The protein localises to the cytoplasm. Its subcellular location is the lysosome. It localises to the late endosome. Its function is as follows. Regulator of deubiquitinating complexes, which acts as a strong activator of USP1, USP12 and USP46. Enhances the USP1-mediated deubiquitination of FANCD2; USP1 being almost inactive by itself. Activates deubiquitination by increasing the catalytic turnover without increasing the affinity of deubiquitinating enzymes for the substrate. Also activates deubiquitinating activity of complexes containing USP12. In complex with USP12, acts as a potential tumor suppressor by positively regulating PHLPP1 stability. Docks at the distal end of the USP12 fingers domain and induces a cascade of structural changes leading to the activation of the enzyme. Together with RAD51AP1, promotes DNA repair by stimulating RAD51-mediated homologous recombination. Binds single-stranded DNA (ssDNA) and double-stranded DNA (dsDNA). DNA-binding is required both for USP1-mediated deubiquitination of FANCD2 and stimulation of RAD51-mediated homologous recombination: both WDR48/UAF1 and RAD51AP1 have coordinated role in DNA-binding during these processes. Together with ATAD5 and by regulating USP1 activity, has a role in PCNA-mediated translesion synthesis (TLS) by deubiquitinating monoubiquitinated PCNA. Together with ATAD5, has a role in recruiting RAD51 to stalled forks during replication stress. (Microbial infection) In case of infection by Herpesvirus saimiri, may play a role in vesicular transport or membrane fusion events necessary for transport to lysosomes. Induces lysosomal vesicle formation via interaction with Herpesvirus saimiri tyrosine kinase-interacting protein (TIP). Subsequently, TIP recruits tyrosine-protein kinase LCK, resulting in down-regulation of T-cell antigen receptor TCR. May play a role in generation of enlarged endosomal vesicles via interaction with TIP. In case of infection by papillomavirus HPV11, promotes the maintenance of the viral genome via its interaction with HPV11 helicase E1. In Homo sapiens (Human), this protein is WD repeat-containing protein 48.